The sequence spans 196 residues: Probable malonic semialdehyde reductase RutE (196 aa).

This sequence belongs to the nitroreductase family. HadB/RutE subfamily. FMN is required as a cofactor.

The catalysed reaction is 3-hydroxypropanoate + NADP(+) = 3-oxopropanoate + NADPH + H(+). Its function is as follows. May reduce toxic product malonic semialdehyde to 3-hydroxypropionic acid, which is excreted. The chain is Probable malonic semialdehyde reductase RutE from Escherichia coli O139:H28 (strain E24377A / ETEC).